We begin with the raw amino-acid sequence, 489 residues long: MTHPVPIQFQSPDLEAIASSAGRIVVFAGEGGAMGVAAKRVNRLMRGALERAAASEAFGKLKQGEAMELGFPAGMAADAVQLVKLDRRCDVATARKAGGAIGRSLSKAGTLVLADTIQRAAEVSFGIALRAYDFTPHKTGEKTVPGPVTMMVANPETVAAEAGPMAALAEGIFFTRDLVNEPANVLSTFDFAARLAAMHELGLEVEILEEEDMEKLGMRALLGVGQGSEHPSKLVVMQWKGGPEDQVPLALVGKGVVFDTGGISIKPAAGMEDMTMDMGGAAVVAGVMRTLAMRKARANVVGLVGIVENMPDGNAQRPGDVVRSMKGDTIEVINTDAEGRLVLADVLWYAQERFNPRGVIDLATLTGAIIVALGHENTGVFSNDDAFCAAFLKAAQSEGEGAWRMPMGERYDEMLKSRIADMRNSTGREAGSITAAHFLRRFVKPETPWIHLDIAGTALLKGDTALAPKGATGWGVLSLDRLIRDMLEK.

2 residues coordinate Mn(2+): K254 and D259. The active site involves K266. Mn(2+) is bound by residues D277, D336, and E338. R340 is a catalytic residue.

Belongs to the peptidase M17 family. Mn(2+) is required as a cofactor.

It localises to the cytoplasm. The catalysed reaction is Release of an N-terminal amino acid, Xaa-|-Yaa-, in which Xaa is preferably Leu, but may be other amino acids including Pro although not Arg or Lys, and Yaa may be Pro. Amino acid amides and methyl esters are also readily hydrolyzed, but rates on arylamides are exceedingly low.. It catalyses the reaction Release of an N-terminal amino acid, preferentially leucine, but not glutamic or aspartic acids.. Its function is as follows. Presumably involved in the processing and regular turnover of intracellular proteins. Catalyzes the removal of unsubstituted N-terminal amino acids from various peptides. This chain is Probable cytosol aminopeptidase, found in Cereibacter sphaeroides (strain ATCC 17025 / ATH 2.4.3) (Rhodobacter sphaeroides).